Here is a 581-residue protein sequence, read N- to C-terminus: Estrogen receptor (581 aa).

The modulating stretch occupies residues 1–144; that stretch reads MYPEDSRVSG…GFEMAKEMRF (144 aa). Disordered stretches follow at residues 45–66 and 99–123; these read APLD…SGPN and RSSV…DSYS. Polar residues predominate over residues 56-66; it reads GSLQSLGSGPN. Positions 142–217 form a DNA-binding region, nuclear receptor; the sequence is MRFCAVCSDY…VGMMKGGVRK (76 aa). 2 consecutive NR C4-type zinc fingers follow at residues 145-165 and 181-200; these read CAVC…CEGC and CPAT…CQAC. Positions 211–272 are hinge; it reads MKGGVRKDRG…GGGKSSVISM (62 aa). The segment covering 216-246 has biased composition (basic and acidic residues); that stretch reads RKDRGRVLRRDKRRTGTSDRDKASKGLEHRT. Positions 216–269 are disordered; it reads RKDRGRVLRRDKRRTGTSDRDKASKGLEHRTAPPQDRRKHISSSAGGGGGKSSV. The region spanning 273–509 is the NR LBD domain; the sequence is PPDQVLLLLR…DLLLEMLDAH (237 aa). Residues 514 to 528 show a composition bias toward basic and acidic residues; sequence PDRPAETWSQADREP. The disordered stretch occupies residues 514 to 581; it reads PDRPAETWSQ…VHPHPMKPTE (68 aa). The span at 572 to 581 shows a compositional bias: basic residues; sequence VHPHPMKPTE.

This sequence belongs to the nuclear hormone receptor family. NR3 subfamily. As to quaternary structure, binds DNA as a homodimer. Can form a heterodimer with ER-beta.

Its subcellular location is the nucleus. Its function is as follows. The steroid hormones and their receptors are involved in the regulation of eukaryotic gene expression and affect cellular proliferation and differentiation in target tissues. The protein is Estrogen receptor (esr1) of Sparus aurata (Gilthead sea bream).